The following is a 242-amino-acid chain: uncharacterized protein (242 aa).

Residues 2–69 (YRLAKIISNA…KPRLWIYYKP (68 aa)) form the S4 RNA-binding domain. D102 serves as the catalytic Nucleophile.

Belongs to the pseudouridine synthase RsuA family.

It catalyses the reaction a uridine in RNA = a pseudouridine in RNA. This is an uncharacterized protein from Rickettsia typhi (strain ATCC VR-144 / Wilmington).